The primary structure comprises 509 residues: Aspartyl/glutamyl-tRNA(Asn/Gln) amidotransferase subunit B (509 aa).

Belongs to the GatB/GatE family. GatB subfamily. Heterotrimer of A, B and C subunits.

It carries out the reaction L-glutamyl-tRNA(Gln) + L-glutamine + ATP + H2O = L-glutaminyl-tRNA(Gln) + L-glutamate + ADP + phosphate + H(+). The enzyme catalyses L-aspartyl-tRNA(Asn) + L-glutamine + ATP + H2O = L-asparaginyl-tRNA(Asn) + L-glutamate + ADP + phosphate + 2 H(+). Functionally, allows the formation of correctly charged Asn-tRNA(Asn) or Gln-tRNA(Gln) through the transamidation of misacylated Asp-tRNA(Asn) or Glu-tRNA(Gln) in organisms which lack either or both of asparaginyl-tRNA or glutaminyl-tRNA synthetases. The reaction takes place in the presence of glutamine and ATP through an activated phospho-Asp-tRNA(Asn) or phospho-Glu-tRNA(Gln). This Psychrobacter cryohalolentis (strain ATCC BAA-1226 / DSM 17306 / VKM B-2378 / K5) protein is Aspartyl/glutamyl-tRNA(Asn/Gln) amidotransferase subunit B.